We begin with the raw amino-acid sequence, 268 residues long: Phosphatidylglycerol--prolipoprotein diacylglyceryl transferase (268 aa).

A run of 4 helical transmembrane segments spans residues 14–34, 57–77, 90–110, and 117–137; these read LGPI…FAGW, LTFY…IIFY, FFLW…LIAF, and IGAN…IGLG. Arginine 140 is an a 1,2-diacyl-sn-glycero-3-phospho-(1'-sn-glycerol) binding site. 3 consecutive transmembrane segments (helical) span residues 174-194, 200-220, and 238-258; these read QLFE…LVTI, YLVL…CEFF, and GQIL…AVFI.

Belongs to the Lgt family.

The protein resides in the cell inner membrane. The catalysed reaction is L-cysteinyl-[prolipoprotein] + a 1,2-diacyl-sn-glycero-3-phospho-(1'-sn-glycerol) = an S-1,2-diacyl-sn-glyceryl-L-cysteinyl-[prolipoprotein] + sn-glycerol 1-phosphate + H(+). It functions in the pathway protein modification; lipoprotein biosynthesis (diacylglyceryl transfer). Functionally, catalyzes the transfer of the diacylglyceryl group from phosphatidylglycerol to the sulfhydryl group of the N-terminal cysteine of a prolipoprotein, the first step in the formation of mature lipoproteins. The protein is Phosphatidylglycerol--prolipoprotein diacylglyceryl transferase of Francisella tularensis subsp. holarctica (strain FTNF002-00 / FTA).